The following is a 102-amino-acid chain: uncharacterized protein (102 aa).

A helical transmembrane segment spans residues 5-27 (IYRSNLVIVITLFVSLSYYHTCF).

It is found in the host membrane. This is an uncharacterized protein from Microplitis demolitor (Parasitoid wasp).